The sequence spans 303 residues: Growth/differentiation factor 15 (303 aa).

The signal sequence occupies residues Met-1–Ser-30. Positions Trp-31–Arg-188 are excised as a propeptide. The N-linked (GlcNAc...) asparagine glycan is linked to Asn-71. Disulfide bonds link Cys-198-Cys-205, Cys-206-Cys-269, Cys-235-Cys-300, and Cys-239-Cys-302.

Belongs to the TGF-beta family. Homodimer; disulfide-linked. Interacts with GFRAL and RET; ligand of GFRAL, which mediates GDF15 internalization and cellular signaling through interaction with RET via the formation of a 2:2:2 ternary complex composed of GDF15, GFRAL and RET. As to expression, detected in plasma (at protein level).

The protein resides in the secreted. Hormone produced in response to various stresses to confer information about those stresses to the brain, and trigger an aversive response, characterized by nausea and/or loss of appetite. The aversive response is both required to reduce continuing exposure to those stresses at the time of exposure and to promote avoidance behavior in the future. Acts by binding to its receptor, GFRAL, activating GFRAL-expressing neurons localized in the area postrema and nucleus tractus solitarius of the brainstem. It then triggers the activation of neurons localized within the parabrachial nucleus and central amygdala, which constitutes part of the 'emergency circuit' that shapes responses to stressful conditions. The GDF15-GFRAL signal induces expression of genes involved in metabolism, such as lipid metabolism in adipose tissues. Contributes to the effect of metformin, an anti-diabetic drug, on appetite reduction and weight loss: produced in the kidney in response to metformin treatment, thereby activating the GDF15-GFRAL response, leading to reduced appetite and weight. Required for avoidance behavior in response to food allergens: induced downstream of mast cell activation to promote aversion and minimize harmful effects of exposure to noxious substances. Produced in response to anticancer drugs, such as camptothecin or cisplatin, promoting nausea and contributing to malnutrition. Overproduced in many cancers, promoting anorexia in cancer (cachexia). Responsible for the risk of nausea during pregnancy: high levels of GDF15 during pregnancy, mostly originating from embryos, are associated with increased nausea. Maternal sensitivity to nausea is probably determined by pre-pregnancy exposure to GDF15, females with naturally high level of GDF15 being less susceptible to nausea than female rats with low levels of GDF15 before pregnancy. Promotes metabolic adaptation in response to systemic inflammation caused by bacterial and viral infections in order to promote tissue tolerance and prevent tissue damage. Required for tissue tolerance in response to myocardial infarction by acting as an inhibitor of leukocyte integring activation, thereby protecting against cardiac rupture. Inhibits growth hormone signaling on hepatocytes. This chain is Growth/differentiation factor 15, found in Rattus norvegicus (Rat).